The chain runs to 995 residues: Polynucleotide 5'-hydroxyl-kinase NOL9 (995 aa).

2 disordered regions span residues E18–K173 and I271–P359. 2 stretches are compositionally biased toward low complexity: residues T75–S94 and V110–K129. Residues E279–S354 show a composition bias toward acidic residues. Residue G639–S646 coordinates ATP.

The protein belongs to the Clp1 family. NOL9/GRC3 subfamily.

Its subcellular location is the nucleus. The protein resides in the nucleolus. Its function is as follows. Polynucleotide 5'-kinase involved in rRNA processing. In Drosophila melanogaster (Fruit fly), this protein is Polynucleotide 5'-hydroxyl-kinase NOL9.